The primary structure comprises 304 residues: MKPDMTVNLAGLELRNPVMTASGTFGYGREFADYVDLEKIGAFVTKGLSLKPRPGNPTPRIVETPGGMLNAIGLQNVGIEAFIAEKVPFLARVNTPAIVNFFGSTPEEYAELAGRLDEIPQVAGLEVNISCPNVKQGGIVFGTDPACAGQVVAACRRATKKPLIVKLSPNVTDVVVMAQACADAGADALSLINTLTGMAIDLKSRKPVLANITGGLSGPAIKPVALRMVWQVSRAVQVPLIGIGGITSATDALEFILAGASAVQVGTASFITPSASQEIAQGMERWLEEHGVARVSDLVGALEC.

FMN-binding positions include serine 22 and 46–47; that span reads KG. Residues lysine 46 and 70-74 contribute to the substrate site; that span reads NAIGL. Positions 100 and 128 each coordinate FMN. Residue asparagine 128 coordinates substrate. Residue cysteine 131 is the Nucleophile of the active site. Residues lysine 166 and isoleucine 192 each contribute to the FMN site. 193–194 lines the substrate pocket; that stretch reads NT. Residues glycine 218, 244–245, and 266–267 contribute to the FMN site; these read GG and GT.

The protein belongs to the dihydroorotate dehydrogenase family. Type 1 subfamily. Heterotetramer of 2 PyrK and 2 PyrD type B subunits. FMN is required as a cofactor.

Its subcellular location is the cytoplasm. The catalysed reaction is (S)-dihydroorotate + NAD(+) = orotate + NADH + H(+). Its pathway is pyrimidine metabolism; UMP biosynthesis via de novo pathway; orotate from (S)-dihydroorotate (NAD(+) route): step 1/1. Its function is as follows. Catalyzes the conversion of dihydroorotate to orotate with NAD(+) as electron acceptor. The sequence is that of Dihydroorotate dehydrogenase B (NAD(+)), catalytic subunit (pyrD) from Pelobacter propionicus (strain DSM 2379 / NBRC 103807 / OttBd1).